Consider the following 209-residue polypeptide: MIGLVGKKVGMTRIFTEDGVSIPVTVIEIENNRVTQVKDLEKDGYRAIQVTTGSKKANRVLKPEAGHFAKAGVEAGRLLREFRLNEGEEYTVGQSISVEIFADVKKVDVTGTSKGKGFAGTVKRWNFRTQDATHGNSLSHRVPGSIGQNQTPGRVFKGKKMAGQLGNEQVTVQSLEVVRVDAERNLLLVKGAVPGATGSDLIVKPAVKA.

Gln-150 is subject to N5-methylglutamine.

The protein belongs to the universal ribosomal protein uL3 family. Part of the 50S ribosomal subunit. Forms a cluster with proteins L14 and L19. Post-translationally, methylated by PrmB.

Functionally, one of the primary rRNA binding proteins, it binds directly near the 3'-end of the 23S rRNA, where it nucleates assembly of the 50S subunit. The protein is Large ribosomal subunit protein uL3 of Proteus mirabilis (strain HI4320).